A 317-amino-acid chain; its full sequence is Aspartate carbamoyltransferase catalytic subunit (317 aa).

Carbamoyl phosphate is bound by residues R66 and T67. K94 lines the L-aspartate pocket. Residues R116, H144, and Q147 each contribute to the carbamoyl phosphate site. The L-aspartate site is built by R177 and R231. Residues G272 and P273 each contribute to the carbamoyl phosphate site.

This sequence belongs to the aspartate/ornithine carbamoyltransferase superfamily. ATCase family. As to quaternary structure, heterododecamer (2C3:3R2) of six catalytic PyrB chains organized as two trimers (C3), and six regulatory PyrI chains organized as three dimers (R2).

The catalysed reaction is carbamoyl phosphate + L-aspartate = N-carbamoyl-L-aspartate + phosphate + H(+). It functions in the pathway pyrimidine metabolism; UMP biosynthesis via de novo pathway; (S)-dihydroorotate from bicarbonate: step 2/3. Functionally, catalyzes the condensation of carbamoyl phosphate and aspartate to form carbamoyl aspartate and inorganic phosphate, the committed step in the de novo pyrimidine nucleotide biosynthesis pathway. The polypeptide is Aspartate carbamoyltransferase catalytic subunit (Rhodopseudomonas palustris (strain HaA2)).